The sequence spans 196 residues: ATP-dependent Clp protease proteolytic subunit (196 aa).

The active-site Nucleophile is the serine 96. Histidine 121 is an active-site residue.

It belongs to the peptidase S14 family. As to quaternary structure, fourteen ClpP subunits assemble into 2 heptameric rings which stack back to back to give a disk-like structure with a central cavity, resembling the structure of eukaryotic proteasomes.

The protein resides in the cytoplasm. The catalysed reaction is Hydrolysis of proteins to small peptides in the presence of ATP and magnesium. alpha-casein is the usual test substrate. In the absence of ATP, only oligopeptides shorter than five residues are hydrolyzed (such as succinyl-Leu-Tyr-|-NHMec, and Leu-Tyr-Leu-|-Tyr-Trp, in which cleavage of the -Tyr-|-Leu- and -Tyr-|-Trp bonds also occurs).. Cleaves peptides in various proteins in a process that requires ATP hydrolysis. Has a chymotrypsin-like activity. Plays a major role in the degradation of misfolded proteins. The sequence is that of ATP-dependent Clp protease proteolytic subunit from Streptococcus sanguinis (strain SK36).